The sequence spans 436 residues: 3-ketoacyl-CoA thiolase (436 aa).

The active-site Acyl-thioester intermediate is the C99. Catalysis depends on proton acceptor residues H392 and C422.

The protein belongs to the thiolase-like superfamily. Thiolase family. Heterotetramer of two alpha chains (FadJ) and two beta chains (FadI).

Its subcellular location is the cytoplasm. It carries out the reaction an acyl-CoA + acetyl-CoA = a 3-oxoacyl-CoA + CoA. Its pathway is lipid metabolism; fatty acid beta-oxidation. Its function is as follows. Catalyzes the final step of fatty acid oxidation in which acetyl-CoA is released and the CoA ester of a fatty acid two carbons shorter is formed. This chain is 3-ketoacyl-CoA thiolase, found in Escherichia coli (strain K12 / MC4100 / BW2952).